Reading from the N-terminus, the 393-residue chain is NAD(P)H-quinone oxidoreductase subunit H, chloroplastic (393 aa).

It belongs to the complex I 49 kDa subunit family. NDH is composed of at least 16 different subunits, 5 of which are encoded in the nucleus.

It is found in the plastid. The protein resides in the chloroplast thylakoid membrane. The enzyme catalyses a plastoquinone + NADH + (n+1) H(+)(in) = a plastoquinol + NAD(+) + n H(+)(out). The catalysed reaction is a plastoquinone + NADPH + (n+1) H(+)(in) = a plastoquinol + NADP(+) + n H(+)(out). In terms of biological role, NDH shuttles electrons from NAD(P)H:plastoquinone, via FMN and iron-sulfur (Fe-S) centers, to quinones in the photosynthetic chain and possibly in a chloroplast respiratory chain. The immediate electron acceptor for the enzyme in this species is believed to be plastoquinone. Couples the redox reaction to proton translocation, and thus conserves the redox energy in a proton gradient. This is NAD(P)H-quinone oxidoreductase subunit H, chloroplastic from Cryptomeria japonica (Japanese cedar).